We begin with the raw amino-acid sequence, 300 residues long: Ribonuclease HIII (300 aa).

The region spanning 83–300 is the RNase H type-2 domain; sequence IPIIGSDEVG…THKAQALLTK (218 aa). 3 residues coordinate a divalent metal cation: aspartate 89, glutamate 90, and aspartate 194.

This sequence belongs to the RNase HII family. RnhC subfamily. It depends on Mn(2+) as a cofactor. Mg(2+) serves as cofactor.

It is found in the cytoplasm. The enzyme catalyses Endonucleolytic cleavage to 5'-phosphomonoester.. Functionally, endonuclease that specifically degrades the RNA of RNA-DNA hybrids. This Streptococcus pyogenes serotype M12 (strain MGAS2096) protein is Ribonuclease HIII.